Reading from the N-terminus, the 435-residue chain is Tektin-4 (435 aa).

The span at 60 to 69 (DQSERQRHES) shows a compositional bias: basic and acidic residues. The tract at residues 60 to 96 (DQSERQRHESQQLATETQALAQRTQQDSTRTVGERLQ) is disordered. Positions 70–85 (QQLATETQALAQRTQQ) are enriched in low complexity. Coiled coils occupy residues 102-180 (KSEL…LLKR), 310-336 (LHKT…DKEA), and 363-411 (FRLL…TNSL).

It belongs to the tektin family. In terms of assembly, microtubule inner protein component of sperm flagellar doublet microtubules. Post-translationally, ubiquitinated, leading to its degradation. Deubiquitinated by USP16, promoting its stability. Strongly expressed in spermatozoa. Also detected at low levels in pancreas. Expressed in airway epithelial cells.

The protein resides in the cytoplasm. The protein localises to the cytoskeleton. Its subcellular location is the cilium axoneme. It is found in the flagellum axoneme. Functionally, microtubule inner protein (MIP) part of the dynein-decorated doublet microtubules (DMTs) in cilia and flagellar axoneme. Forms filamentous polymers in the walls of ciliary and flagellar microtubules. Contributes to normal sperm motility. The protein is Tektin-4 of Homo sapiens (Human).